The following is a 913-amino-acid chain: MAALFLRGFVQIGNCKTGISKSKEAFIEAVERKKKDRLVLYFKSGKYSTFRLSDNIQNVVLKSYRGNQNHLHLTLQNNNGLFIEGLSSTDAEQLKIFLDRVHQNEVQPPVRPGKGGSVFSSTTQKEINKTSFHKVDEKSSSKSFEIAKGSGTGVLQRMPLLTSKLTLTCGELSENQHKKRKRMLSSSSEMNEEFLKENNSVEYKKSKADCSRCVSYNREKQLKLKELEENKKLECESSCIMNATGNPYLDDIGLLQALTEKMVLVFLLQQGYSDGYTKWDKLKLFFELFPEKICHGLPNLGNTCYMNAVLQSLLSIPSFADDLLNQSFPWGKIPLNALTMCLARLLFFKDTYNIEIKEMLLLNLKKAISAAAEIFHGNAQNDAHEFLAHCLDQLKDNMEKLNTIWKPKSEFGEDNFPKQVFADDPDTSGFSCPVITNFELELLHSIACKACGQVILKTELNNYLSINLPQRIKAHPSSIQSTFDLFFGAEELEYKCAKCEHKTSVGVHSFSRLPRILIVHLKRYSLNEFCALKKNDQEVIISKYLKVSSHCNEGTRPPLPLSEDGEITDFQLLKVIRKMTSGNISVSWPATKESKDILAPHIGSDKESEQKKGQTVFKGASRRQQQKYLGKNSKPNELESVYSGDRAFIEKEPLAHLMTYLEDTSLCQFHKAGGKPASSPGTPLSKVDFQTVPENPKRKKYVKTSKFVAFDRIINPTKDLYEDKNIRIPERFQKVSEQTQQCDGMRICEQAPQQALPQSFPKPGTQGHTKNLLRPTKLNLQKSNRNSLLALGSNKNPRNKDILDKIKSKAKETKRNDDKGDHTYRLISVVSHLGKTLKSGHYICDAYDFEKQIWFTYDDMRVLGIQEAQMQEDRRCTGYIFFYMHNEIFEEMLKREENAQLNSKEVEETLQKE.

In terms of domain architecture, USP spans 295 to 886 (HGLPNLGNTC…TGYIFFYMHN (592 aa)). Cys304 functions as the Nucleophile in the catalytic mechanism. A compositionally biased stretch (basic and acidic residues) spans 601–612 (HIGSDKESEQKK). Disordered regions lie at residues 601–636 (HIGS…SKPN) and 753–772 (QQAL…TKNL). The active-site Proton acceptor is His841.

This sequence belongs to the peptidase C19 family. As to quaternary structure, interacts with RING1. In terms of tissue distribution, expressed in testis.

It localises to the nucleus. Its subcellular location is the cytoplasm. The protein resides in the cytoskeleton. The protein localises to the flagellum axoneme. It catalyses the reaction Thiol-dependent hydrolysis of ester, thioester, amide, peptide and isopeptide bonds formed by the C-terminal Gly of ubiquitin (a 76-residue protein attached to proteins as an intracellular targeting signal).. Functionally, deubiquitinase regulating several biological processes through the deubiquitination of components of these processes. Involved in somatic cell reprogramming through the 'Lys-48'-linked deubiquitination and stabilization of CBX4 and CBX6, two components of the polycomb-repressive complex 1 (PRC1). Also deubiquitinates and probably stabilizes the androgen receptor (AR), regulating the androgen receptor signaling pathway. May play a role in spermatogenesis. This chain is Ubiquitin carboxyl-terminal hydrolase 26, found in Homo sapiens (Human).